Here is a 311-residue protein sequence, read N- to C-terminus: Linearmycin resistance ATP-binding protein LnrL (311 aa).

The 231-residue stretch at 2–232 folds into the ABC transporter domain; that stretch reads LQAENIKKAY…LGGDTIIQLT (231 aa). 34–41 provides a ligand contact to ATP; sequence GPNGAGKS.

The protein belongs to the ABC transporter superfamily. As to quaternary structure, the complex is composed of two ATP-binding proteins (LnrL) and two transmembrane proteins (LnrM and LnrN).

Its function is as follows. Required for resistance to linearmycins, a family of antibiotic-specialized metabolites produced by some streptomycetes. Part of the ABC transporter complex LnrLMN that probably facilitates linearmycin removal from the membrane. Responsible for energy coupling to the transport system. Also mediates KinC-dependent biofilm morphology. The sequence is that of Linearmycin resistance ATP-binding protein LnrL from Bacillus subtilis (strain 168).